The chain runs to 177 residues: Large ribosomal subunit protein uL6 (177 aa).

Belongs to the universal ribosomal protein uL6 family. Part of the 50S ribosomal subunit.

Its function is as follows. This protein binds to the 23S rRNA, and is important in its secondary structure. It is located near the subunit interface in the base of the L7/L12 stalk, and near the tRNA binding site of the peptidyltransferase center. The protein is Large ribosomal subunit protein uL6 of Psychromonas ingrahamii (strain DSM 17664 / CCUG 51855 / 37).